We begin with the raw amino-acid sequence, 361 residues long: S-adenosylmethionine:tRNA ribosyltransferase-isomerase (361 aa).

The protein belongs to the QueA family. In terms of assembly, monomer.

The protein localises to the cytoplasm. The catalysed reaction is 7-aminomethyl-7-carbaguanosine(34) in tRNA + S-adenosyl-L-methionine = epoxyqueuosine(34) in tRNA + adenine + L-methionine + 2 H(+). Its pathway is tRNA modification; tRNA-queuosine biosynthesis. In terms of biological role, transfers and isomerizes the ribose moiety from AdoMet to the 7-aminomethyl group of 7-deazaguanine (preQ1-tRNA) to give epoxyqueuosine (oQ-tRNA). The sequence is that of S-adenosylmethionine:tRNA ribosyltransferase-isomerase from Haemophilus ducreyi (strain 35000HP / ATCC 700724).